Consider the following 236-residue polypeptide: Syntaxin-8 (236 aa).

The Cytoplasmic portion of the chain corresponds to 1–215; it reads MAPDPWFSTY…LVDRKSASCG (215 aa). Residues 42–65 adopt a coiled-coil conformation; it reads LTIRTLLKNLKVKIDLLKDLLLRA. Phosphoserine is present on residues serine 102 and serine 160. Residues 145-207 enclose the t-SNARE coiled-coil homology domain; it reads QKIIQEQDAG…RTEARRVTLV (63 aa). Residues 216 to 232 form a helical; Anchor for type IV membrane protein membrane-spanning segment; sequence MIMVILLLLVAIVVVAV. Topologically, residues 233–236 are vesicular; the sequence is WPTN.

It belongs to the syntaxin family. In terms of assembly, part of the SNARE core complex containing STX7, VAMP8 and VTI1B. Interacts with VAMP8. Forms a SNARE complex with STX7, VTI1B and VAMP8 which functions in the homotypic fusion of late endosomes. Component of the SNARE complex composed of STX7, STX8, VAMP7 and VTI1B that is required for heterotypic fusion of late endosomes with lysosomes. Interacts with HECTD3. Interacts with TPC1. In terms of processing, ubiquitinated by HECTD3. Widely expressed in all tissues examined.

The protein localises to the membrane. Functionally, vesicle trafficking protein that functions in the early secretory pathway, possibly by mediating retrograde transport from cis-Golgi membranes to the ER. The chain is Syntaxin-8 (Stx8) from Rattus norvegicus (Rat).